We begin with the raw amino-acid sequence, 483 residues long: MGLFDFSVKELHDKLVKKEISPFDLVSESFNRIESVEDKVGSFITLNKEAAFGVAEELGDAGIDPNNMLAGLPIGIKDNIVTKNLRTTAASKILENFDPIYDATVVSKLKNAQTINIGKLNMDEFAMGSSTETSYFHKTHNPWDLSRVPGGSSGGSASAVAAGEVLFSLGSDTGGSIRQPAAFCGVVGMKPTYGRVSRFGLIAFASSLDQIGPITKNVEDNAYLLEAISGLDANDSTSINQPVERFSDSLTGDIKGLRIGVPKEYLAEGVDPGVKQAVLDALKTLEKLGATWDEVSLPHSEYGVASYYILASSEASSNLSRFDGVRYGYRSPNATTLEELYTKTRSEGFGDEVKRRIMLGTYALSSGYYDAYYKKAQQARTLIKQDFINVFENYDVIIGPSSPTTAFKIDGMINDPITMYSNDILTVPINLAGVPAISVPCGFSDGLPVGLQIIGNYFEESLLYKVAHAFEQETTFHKEKPNL.

Active-site charge relay system residues include K77 and S152. Catalysis depends on S176, which acts as the Acyl-ester intermediate.

The protein belongs to the amidase family. GatA subfamily. In terms of assembly, heterotrimer of A, B and C subunits.

It carries out the reaction L-glutamyl-tRNA(Gln) + L-glutamine + ATP + H2O = L-glutaminyl-tRNA(Gln) + L-glutamate + ADP + phosphate + H(+). Allows the formation of correctly charged Gln-tRNA(Gln) through the transamidation of misacylated Glu-tRNA(Gln) in organisms which lack glutaminyl-tRNA synthetase. The reaction takes place in the presence of glutamine and ATP through an activated gamma-phospho-Glu-tRNA(Gln). This Listeria monocytogenes serovar 1/2a (strain ATCC BAA-679 / EGD-e) protein is Glutamyl-tRNA(Gln) amidotransferase subunit A.